The sequence spans 342 residues: tRNA N6-adenosine threonylcarbamoyltransferase (342 aa).

Fe cation-binding residues include histidine 111 and histidine 115. Substrate contacts are provided by residues 134-138 (LVSGG), aspartate 167, glycine 180, and asparagine 274. Aspartate 302 is a binding site for Fe cation.

This sequence belongs to the KAE1 / TsaD family. Requires Fe(2+) as cofactor.

It is found in the cytoplasm. It catalyses the reaction L-threonylcarbamoyladenylate + adenosine(37) in tRNA = N(6)-L-threonylcarbamoyladenosine(37) in tRNA + AMP + H(+). Functionally, required for the formation of a threonylcarbamoyl group on adenosine at position 37 (t(6)A37) in tRNAs that read codons beginning with adenine. Is involved in the transfer of the threonylcarbamoyl moiety of threonylcarbamoyl-AMP (TC-AMP) to the N6 group of A37, together with TsaE and TsaB. TsaD likely plays a direct catalytic role in this reaction. This chain is tRNA N6-adenosine threonylcarbamoyltransferase, found in Herminiimonas arsenicoxydans.